The following is a 79-amino-acid chain: Acyl carrier protein (79 aa).

Residues 2–77 enclose the Carrier domain; the sequence is SDIEARVKKI…NAIDYANTHQ (76 aa). S37 is modified (O-(pantetheine 4'-phosphoryl)serine).

Belongs to the acyl carrier protein (ACP) family. In terms of processing, 4'-phosphopantetheine is transferred from CoA to a specific serine of apo-ACP by AcpS. This modification is essential for activity because fatty acids are bound in thioester linkage to the sulfhydryl of the prosthetic group.

It localises to the cytoplasm. It functions in the pathway lipid metabolism; fatty acid biosynthesis. Its function is as follows. Carrier of the growing fatty acid chain in fatty acid biosynthesis. In Paracidovorax citrulli (strain AAC00-1) (Acidovorax citrulli), this protein is Acyl carrier protein.